Here is a 346-residue protein sequence, read N- to C-terminus: Leucine zipper protein 2 (346 aa).

An N-terminal signal peptide occupies residues 1–19 (MKFSPAHYLLPLLPALVLS). Residues 16 to 211 (LVLSTRQDYE…QMKAMKETVQ (196 aa)) adopt a coiled-coil conformation. Asn133 carries an N-linked (GlcNAc...) asparagine glycan. The tract at residues 164–192 (LRYGKKDLLFKAQQLTDLEQKLAVAKNEL) is leucine-zipper. Disordered regions lie at residues 221 to 240 (QPPP…LLPP) and 248 to 346 (PDAA…EKIL). Residues 250 to 261 (AAAKSKPQQSAS) are compositionally biased toward low complexity. Residues 262 to 283 (GNNESSQVESTKEGNPSTTACD) are compositionally biased toward polar residues. N-linked (GlcNAc...) asparagine glycosylation is present at Asn264. Residues 286-298 (DEGRPCSMKHKES) are compositionally biased toward basic and acidic residues. Asn302 is a glycosylation site (N-linked (GlcNAc...) asparagine).

It localises to the secreted. The polypeptide is Leucine zipper protein 2 (LUZP2) (Homo sapiens (Human)).